We begin with the raw amino-acid sequence, 341 residues long: DNA-directed RNA polymerase subunit alpha (341 aa).

An alpha N-terminal domain (alpha-NTD) region spans residues 1–223 (MEQKRPQLKA…DELSVFGNVE (223 aa)). An alpha C-terminal domain (alpha-CTD) region spans residues 268-341 (PQPFPTDQDT…LAQFGLALRD (74 aa)).

It belongs to the RNA polymerase alpha chain family. As to quaternary structure, homodimer. The RNAP catalytic core consists of 2 alpha, 1 beta, 1 beta' and 1 omega subunit. When a sigma factor is associated with the core the holoenzyme is formed, which can initiate transcription.

The catalysed reaction is RNA(n) + a ribonucleoside 5'-triphosphate = RNA(n+1) + diphosphate. Functionally, DNA-dependent RNA polymerase catalyzes the transcription of DNA into RNA using the four ribonucleoside triphosphates as substrates. The protein is DNA-directed RNA polymerase subunit alpha of Deinococcus radiodurans (strain ATCC 13939 / DSM 20539 / JCM 16871 / CCUG 27074 / LMG 4051 / NBRC 15346 / NCIMB 9279 / VKM B-1422 / R1).